The following is a 574-amino-acid chain: Membrane protein insertase YidC (574 aa).

The chain crosses the membrane as a helical span at residues 6 to 26 (VFLIFAWLMVAALLWMEWGKE). A disordered region spans residues 65–85 (QAGAPGKVPATSTTTATPAAA). The next 5 helical transmembrane spans lie at 350–370 (VIDY…FWVL), 376–396 (FLHN…LVLY), 447–467 (GGCL…WVLV), 491–511 (FILP…TPTP), and 525–545 (PLVF…YWVV).

It belongs to the OXA1/ALB3/YidC family. Type 1 subfamily. As to quaternary structure, interacts with the Sec translocase complex via SecD. Specifically interacts with transmembrane segments of nascent integral membrane proteins during membrane integration.

It is found in the cell inner membrane. Required for the insertion and/or proper folding and/or complex formation of integral membrane proteins into the membrane. Involved in integration of membrane proteins that insert both dependently and independently of the Sec translocase complex, as well as at least some lipoproteins. Aids folding of multispanning membrane proteins. In Xanthomonas oryzae pv. oryzae (strain PXO99A), this protein is Membrane protein insertase YidC.